A 382-amino-acid chain; its full sequence is Na(+)/H(+) antiporter NhaA (382 aa).

A run of 11 helical transmembrane segments spans residues 13–33 (IGGI…NSPF), 58–78 (LLLW…GLEI), 94–114 (LVPA…FIFF), 124–144 (GWAI…SLLG), 153–173 (ILLT…IALF), 179–199 (SLLS…LNYF), 204–224 (ISVF…SGVH), 256–276 (VVFL…FVGL), 285–305 (VVLG…FLSL), 325–345 (VYGI…IGSL), and 357–377 (MVKI…FLVL).

It belongs to the NhaA Na(+)/H(+) (TC 2.A.33) antiporter family.

It is found in the cell inner membrane. It catalyses the reaction Na(+)(in) + 2 H(+)(out) = Na(+)(out) + 2 H(+)(in). Na(+)/H(+) antiporter that extrudes sodium in exchange for external protons. This is Na(+)/H(+) antiporter NhaA from Legionella pneumophila (strain Paris).